The sequence spans 368 residues: Ferrochelatase (368 aa).

2 residues coordinate Fe cation: His-209 and Glu-290.

It belongs to the ferrochelatase family.

Its subcellular location is the cytoplasm. It carries out the reaction heme b + 2 H(+) = protoporphyrin IX + Fe(2+). The protein operates within porphyrin-containing compound metabolism; protoheme biosynthesis; protoheme from protoporphyrin-IX: step 1/1. Catalyzes the ferrous insertion into protoporphyrin IX. This is Ferrochelatase from Herminiimonas arsenicoxydans.